A 137-amino-acid chain; its full sequence is Nucleoside diphosphate kinase (137 aa).

Residues lysine 11, phenylalanine 59, arginine 87, threonine 93, arginine 104, and asparagine 114 each coordinate ATP. The active-site Pros-phosphohistidine intermediate is the histidine 117.

The protein belongs to the NDK family. In terms of assembly, homotetramer. Mg(2+) is required as a cofactor.

It localises to the cytoplasm. It carries out the reaction a 2'-deoxyribonucleoside 5'-diphosphate + ATP = a 2'-deoxyribonucleoside 5'-triphosphate + ADP. The catalysed reaction is a ribonucleoside 5'-diphosphate + ATP = a ribonucleoside 5'-triphosphate + ADP. Its function is as follows. Major role in the synthesis of nucleoside triphosphates other than ATP. The ATP gamma phosphate is transferred to the NDP beta phosphate via a ping-pong mechanism, using a phosphorylated active-site intermediate. The chain is Nucleoside diphosphate kinase from Parafrankia sp. (strain EAN1pec).